The primary structure comprises 548 residues: MFS-type transporter TOXA (548 aa).

Residues 1-12 (MDEQIVSASSNV) show a composition bias toward polar residues. Residues 1–33 (MDEQIVSASSNVKDGVEKQPVKDREDVDANVVP) are disordered. Over residues 14 to 27 (DGVEKQPVKDREDV) the composition is skewed to basic and acidic residues. 14 helical membrane passes run 43–63 (ISLI…FLGA), 85–105 (AVAW…PLFG), 114–134 (KWLF…CALA), 146–166 (VAGI…ALIV), 177–197 (MIGA…GAIA), 204–224 (WCFW…LFFF), 250–270 (IGAG…QWGG), 280–300 (VVAL…HQYW), 316–336 (GFLL…AALY), 357–377 (MLPI…TISF), 382–402 (APFI…LYTF), 411–431 (IIGY…QAFI), 444–464 (YASA…LCVC), and 518–538 (FLVA…LSWA).

The protein belongs to the major facilitator superfamily. TCR/Tet family.

Its subcellular location is the membrane. Its function is as follows. MFS-type transporter; part of the diffuse TOX2 gene cluster that mediates the biosynthesis of the HC-toxin, cyclic tetrapeptide of structure cyclo(D-Pro-L-Ala-D-Ala-L-Aeo), where Aeo stands for 2-amino-9,10-epoxi-8-oxodecanoic acid. HC-toxin is a determinant of specificity and virulence in the interaction between the producing fungus and its host, maize. TOXA acts as a HC-toxin efflux pump which contributes to self-protection against HC-toxin and/or the secretion of HC-toxin into the extracellular milieu. This chain is MFS-type transporter TOXA, found in Cochliobolus carbonum (Maize leaf spot fungus).